A 954-amino-acid polypeptide reads, in one-letter code: Endoplasmic reticulum aminopeptidase 2 (954 aa).

The Cytoplasmic portion of the chain corresponds to 1–7 (MANSCRK). A helical; Signal-anchor for type II membrane protein membrane pass occupies residues 8-28 (LIFNIYVVFYCSAVIMPQICI). The Lumenal segment spans residues 29 to 954 (CSQFTSSPID…TLRKWLLTSI (926 aa)). Asn-79 and Asn-113 each carry an N-linked (GlcNAc...) asparagine glycan. Substrate-binding positions include Glu-194 and 328-332 (GAMEN). His-364 is a binding site for Zn(2+). Residue Glu-365 is the Proton acceptor of the active site. Zn(2+) contacts are provided by His-368 and Glu-387. N-linked (GlcNAc...) asparagine glycosylation occurs at Asn-399. Cys-415 and Cys-454 are oxidised to a cystine. N-linked (GlcNAc...) asparagine glycosylation is present at Asn-644. Cys-753 and Cys-760 are disulfide-bonded.

The protein belongs to the peptidase M1 family. Heterodimer with ERAP1. Zn(2+) serves as cofactor. In terms of processing, N-glycosylated.

The protein resides in the endoplasmic reticulum membrane. Aminopeptidase that plays a central role in peptide trimming, a step required for the generation of most HLA class I-binding peptides. Peptide trimming is essential to customize longer precursor peptides to fit them to the correct length required for presentation on MHC class I molecules. Preferentially hydrolyzes the basic residues Arg and Lys. The protein is Endoplasmic reticulum aminopeptidase 2 (ERAP2) of Bos taurus (Bovine).